We begin with the raw amino-acid sequence, 71 residues long: Translation initiation factor IF-1 (71 aa).

One can recognise an S1-like domain in the interval 1–71; sequence MSKDDLIQFT…LTKGRVIHRH (71 aa).

The protein belongs to the IF-1 family. Component of the 30S ribosomal translation pre-initiation complex which assembles on the 30S ribosome in the order IF-2 and IF-3, IF-1 and N-formylmethionyl-tRNA(fMet); mRNA recruitment can occur at any time during PIC assembly.

It is found in the cytoplasm. Functionally, one of the essential components for the initiation of protein synthesis. Stabilizes the binding of IF-2 and IF-3 on the 30S subunit to which N-formylmethionyl-tRNA(fMet) subsequently binds. Helps modulate mRNA selection, yielding the 30S pre-initiation complex (PIC). Upon addition of the 50S ribosomal subunit IF-1, IF-2 and IF-3 are released leaving the mature 70S translation initiation complex. The sequence is that of Translation initiation factor IF-1 from Rickettsia prowazekii (strain Madrid E).